The chain runs to 643 residues: Threonine--tRNA ligase (643 aa).

A TGS domain is found at 1–61 (MPIITLPDGS…SEDSSLEIIT (61 aa)). A catalytic region spans residues 243–534 (DHRRIGKALD…ITEEYAGFFP (292 aa)). Zn(2+) contacts are provided by cysteine 334, histidine 385, and histidine 511.

It belongs to the class-II aminoacyl-tRNA synthetase family. Homodimer. It depends on Zn(2+) as a cofactor.

The protein resides in the cytoplasm. The enzyme catalyses tRNA(Thr) + L-threonine + ATP = L-threonyl-tRNA(Thr) + AMP + diphosphate + H(+). In terms of biological role, catalyzes the attachment of threonine to tRNA(Thr) in a two-step reaction: L-threonine is first activated by ATP to form Thr-AMP and then transferred to the acceptor end of tRNA(Thr). Also edits incorrectly charged L-seryl-tRNA(Thr). This is Threonine--tRNA ligase from Actinobacillus pleuropneumoniae serotype 5b (strain L20).